Here is a 116-residue protein sequence, read N- to C-terminus: NADH-ubiquinone oxidoreductase chain 3 (116 aa).

The next 3 helical transmembrane spans lie at 3–23 (LITT…TISF), 56–76 (FFLI…LLPL), and 87–107 (LTLI…IYEW).

Belongs to the complex I subunit 3 family.

It is found in the mitochondrion membrane. It carries out the reaction a ubiquinone + NADH + 5 H(+)(in) = a ubiquinol + NAD(+) + 4 H(+)(out). Its function is as follows. Core subunit of the mitochondrial membrane respiratory chain NADH dehydrogenase (Complex I) that is believed to belong to the minimal assembly required for catalysis. Complex I functions in the transfer of electrons from NADH to the respiratory chain. The immediate electron acceptor for the enzyme is believed to be ubiquinone. This is NADH-ubiquinone oxidoreductase chain 3 (MT-ND3) from Oncorhynchus keta (Chum salmon).